A 517-amino-acid chain; its full sequence is Crotonobetaine/carnitine--CoA ligase (517 aa).

This sequence belongs to the ATP-dependent AMP-binding enzyme family.

The catalysed reaction is 4-(trimethylamino)butanoate + ATP + CoA = 4-(trimethylamino)butanoyl-CoA + AMP + diphosphate. It catalyses the reaction crotonobetaine + ATP + CoA = crotonobetainyl-CoA + AMP + diphosphate. The enzyme catalyses (R)-carnitine + ATP + CoA = (R)-carnitinyl-CoA + AMP + diphosphate. It functions in the pathway amine and polyamine metabolism; carnitine metabolism. Functionally, catalyzes the transfer of CoA to carnitine, generating the initial carnitinyl-CoA needed for the CaiB reaction cycle. Also has activity toward crotonobetaine and gamma-butyrobetaine. This Escherichia coli O127:H6 (strain E2348/69 / EPEC) protein is Crotonobetaine/carnitine--CoA ligase.